The sequence spans 571 residues: Dihydroxy-acid dehydratase (571 aa).

Cys56 contributes to the [2Fe-2S] cluster binding site. Mg(2+) is bound at residue Asp88. Cys129 provides a ligand contact to [2Fe-2S] cluster. The Mg(2+) site is built by Asp130 and Lys131. Lys131 carries the post-translational modification N6-carboxylysine. A [2Fe-2S] cluster-binding site is contributed by Cys201. Residue Glu452 coordinates Mg(2+). The active-site Proton acceptor is Ser478.

This sequence belongs to the IlvD/Edd family. As to quaternary structure, homodimer. Requires [2Fe-2S] cluster as cofactor. Mg(2+) is required as a cofactor.

The enzyme catalyses (2R)-2,3-dihydroxy-3-methylbutanoate = 3-methyl-2-oxobutanoate + H2O. The catalysed reaction is (2R,3R)-2,3-dihydroxy-3-methylpentanoate = (S)-3-methyl-2-oxopentanoate + H2O. Its pathway is amino-acid biosynthesis; L-isoleucine biosynthesis; L-isoleucine from 2-oxobutanoate: step 3/4. It participates in amino-acid biosynthesis; L-valine biosynthesis; L-valine from pyruvate: step 3/4. In terms of biological role, functions in the biosynthesis of branched-chain amino acids. Catalyzes the dehydration of (2R,3R)-2,3-dihydroxy-3-methylpentanoate (2,3-dihydroxy-3-methylvalerate) into 2-oxo-3-methylpentanoate (2-oxo-3-methylvalerate) and of (2R)-2,3-dihydroxy-3-methylbutanoate (2,3-dihydroxyisovalerate) into 2-oxo-3-methylbutanoate (2-oxoisovalerate), the penultimate precursor to L-isoleucine and L-valine, respectively. In Streptococcus mutans serotype c (strain ATCC 700610 / UA159), this protein is Dihydroxy-acid dehydratase.